The following is a 59-amino-acid chain: Large ribosomal subunit protein uL30 (59 aa).

The protein belongs to the universal ribosomal protein uL30 family. Part of the 50S ribosomal subunit.

This is Large ribosomal subunit protein uL30 from Solibacter usitatus (strain Ellin6076).